The primary structure comprises 471 residues: Heat shock 70 kDa protein 13 (471 aa).

The first 22 residues, 1–22 (MAREMTILGSAVLTLLLAGYLA), serve as a signal peptide directing secretion. A compositionally biased stretch (basic and acidic residues) spans 315–341 (EQDRKEPHSSDTELPKDKLSSADDHRV). Residues 315 to 352 (EQDRKEPHSSDTELPKDKLSSADDHRVNSGFGRGLSDK) form a disordered region.

This sequence belongs to the heat shock protein 70 family. In terms of assembly, binds UBQLN2. In terms of tissue distribution, constitutively expressed in all tissues.

Its subcellular location is the microsome. It is found in the endoplasmic reticulum. Its function is as follows. Has peptide-independent ATPase activity. This Homo sapiens (Human) protein is Heat shock 70 kDa protein 13 (HSPA13).